A 145-amino-acid chain; its full sequence is uncharacterized protein (145 aa).

To R.meliloti R00649.

This is an uncharacterized protein from Agrobacterium fabrum (strain C58 / ATCC 33970) (Agrobacterium tumefaciens (strain C58)).